The primary structure comprises 399 residues: Tryptophan synthase beta chain (399 aa).

At Lys91 the chain carries N6-(pyridoxal phosphate)lysine.

It belongs to the TrpB family. In terms of assembly, tetramer of two alpha and two beta chains. Requires pyridoxal 5'-phosphate as cofactor.

It catalyses the reaction (1S,2R)-1-C-(indol-3-yl)glycerol 3-phosphate + L-serine = D-glyceraldehyde 3-phosphate + L-tryptophan + H2O. The protein operates within amino-acid biosynthesis; L-tryptophan biosynthesis; L-tryptophan from chorismate: step 5/5. Functionally, the beta subunit is responsible for the synthesis of L-tryptophan from indole and L-serine. This Shouchella clausii (strain KSM-K16) (Alkalihalobacillus clausii) protein is Tryptophan synthase beta chain.